The chain runs to 1076 residues: MLRNGNEGMSTIPGFSQIQFEGFFRFINQALAEELDKFPTIKDPDHEIAFQLFAKGYQLLEPSIKERDAVYESLTYSSELYVSARLIFGFDVQKQTISIGNIPIMNSLGTFIINGIYRIVINQILLSPGIYYRSELDHKGISIYTGTIISDWGGRSELAIDKKERIWARVSRKQKISILVLSSAMGSNLREILDNVSYPEIFLSFPNAKEKKRIESKEKAILEFYQQFACVGGDLVFSESLCEELQKKFFQQKCELGRIGRRNMNRRLNLDIPQNNTFLLPRDVLAATDHLIGMKFGTGILDDDDMNHLKNKRIRSVADLLQDQFGLALGRLQHAVQKTIRRVFIRQSKPTPQTLVTPTSTSILLITTYETFFGTYPLSQVFDQTNPLTQTVHGRKVSCLGPGGLTGRTASFRSRDIHPSHYGRICPIDTSEGINVGLTGSLAIHARIDHLWGSIESPFYEISAEKAKEKKERQVVYLSPNRDEYYMIAAGNSLSLNQGIQEEQVVPARYRQEFLTIAWEQIHVRSIFPFQYFSIGGSLIPFIEHNDANRALMSSNMQRQAVPLSRSEKCIVGTGLERQTALDSRVSVIAEREGKIISTDSHKILLSSSGKTISIPLVNHRRSNKNTCMHQKPRVPRGKSIKKGQILAEGAATVGGELALGKNVLVAYMPWEGYNFEDAVLISERLVYEDIYTSFHIRKYEIQTDTTSQGSAEKITKEIPHLEEHLLRNLDKNGVVRLGSWVETGDILVGKLTPQIASESSYIAEAGLLRAIFGLEVSTSKETSLKLPIGGRGRVIDVKWIQRDPLDIMVRVYILQKREIKVGDKVAGRHGNKGIISKILPRQDMPYLQDGTPVDMVFNPLGVPSRMNVGQIFESSLGLAGDLLKKHYRIAPFDERYEQEASRKLVFSELYEASKETKNPWVFEPEYPGKSRIFDGRTGDPFEQPVLIGKSYILKLIHQVDEKIHGRSTGPYSLVTQQPVRGRAKQGGQRVGEMEVWALEGFGVAHILQEILTYKSDHLIARQEILNATIWGKRIPNHEDPPESFRVLVRELRSLALELNHFLVSEKNFQVNREEV.

This sequence belongs to the RNA polymerase beta chain family. As to quaternary structure, in plastids the minimal PEP RNA polymerase catalytic core is composed of four subunits: alpha, beta, beta', and beta''. When a (nuclear-encoded) sigma factor is associated with the core the holoenzyme is formed, which can initiate transcription.

The protein resides in the plastid. Its subcellular location is the chloroplast. The enzyme catalyses RNA(n) + a ribonucleoside 5'-triphosphate = RNA(n+1) + diphosphate. Functionally, DNA-dependent RNA polymerase catalyzes the transcription of DNA into RNA using the four ribonucleoside triphosphates as substrates. This Hordeum vulgare (Barley) protein is DNA-directed RNA polymerase subunit beta.